The primary structure comprises 272 residues: MSTYAIGDLQGCHAEFEALLERIAFEPRRDRLWLVGDLVNRGPGSLACLRAVKALGDSARVVLGNHDLHLLAAAWAGAPLKRSDTLAPILEADDRDELLDWLRRQPLLVRDDELDAVMTHAGLPPHWSVTQAAEHAAEVERALRGEAVGDFLAAMYGNSPARWTDELEGIDRLRVIVNTFTRMRFIAADGTLDFAAKEGLDSAPEGFAPWFTYARDDDPRIVFGHWAALQGATPGARVRALALDTGCVWGGALTALDLVSGEYHVEPAHASR.

The protein belongs to the Ap4A hydrolase family.

The enzyme catalyses P(1),P(4)-bis(5'-adenosyl) tetraphosphate + H2O = 2 ADP + 2 H(+). In terms of biological role, hydrolyzes diadenosine 5',5'''-P1,P4-tetraphosphate to yield ADP. This Chromohalobacter salexigens (strain ATCC BAA-138 / DSM 3043 / CIP 106854 / NCIMB 13768 / 1H11) protein is Bis(5'-nucleosyl)-tetraphosphatase, symmetrical.